The primary structure comprises 348 residues: S-adenosylmethionine:tRNA ribosyltransferase-isomerase (348 aa).

Belongs to the QueA family. Monomer.

The protein localises to the cytoplasm. It carries out the reaction 7-aminomethyl-7-carbaguanosine(34) in tRNA + S-adenosyl-L-methionine = epoxyqueuosine(34) in tRNA + adenine + L-methionine + 2 H(+). The protein operates within tRNA modification; tRNA-queuosine biosynthesis. Functionally, transfers and isomerizes the ribose moiety from AdoMet to the 7-aminomethyl group of 7-deazaguanine (preQ1-tRNA) to give epoxyqueuosine (oQ-tRNA). This Tolumonas auensis (strain DSM 9187 / NBRC 110442 / TA 4) protein is S-adenosylmethionine:tRNA ribosyltransferase-isomerase.